Consider the following 167-residue polypeptide: Insertion element IS1 2 protein InsB (167 aa).

Belongs to the transposase 27 family.

Its function is as follows. Absolutely required for transposition of IS1. The chain is Insertion element IS1 2 protein InsB (insB2) from Escherichia coli (strain K12).